Reading from the N-terminus, the 1491-residue chain is CLIP-associating protein (1491 aa).

4 HEAT repeats span residues 44-82 (CTDMGFLIDGLMPWLTGSHFKIAQKSLEAFSELIKRLGS), 85-123 (NAYTATVLPHVIDRLGDSRDTVREKAQLLLRDLMEHRVL), 163-201 (QLSVRVYIPPVCALLGDPTVNVREAAIQTLVEIYKHVGD), and 402-440 (DAFCWSILEHLINLIQNSAKVIASASTIALKYIIKYTHA). Disordered stretches follow at residues 537-586 (RERE…AVDT) and 600-739 (LYSR…NNPV). Gly residues predominate over residues 542 to 551 (GGGGGTGTGT). Polar residues predominate over residues 569-580 (GTLQKPTPSMRS). 3 positions are modified to phosphoserine: S582, S626, and S634. The span at 632–646 (LNSNSGGTPATTPGS) shows a compositional bias: polar residues. A Phosphothreonine modification is found at T648. 2 stretches are compositionally biased toward polar residues: residues 657 to 671 (VSQSQPGSRSTSPST) and 699 to 712 (PRSTASSRETSPTR). 5 positions are modified to phosphoserine: S806, S817, S820, S822, and S824. HEAT repeat units follow at residues 874–912 (QQQLKCVLDMFRKMFMDTHTKVYSLFLDTVTELILVHAN) and 955–993 (QLQLKELFRIISDSTQTPTTKTRIAILRFLTDLANTYCK). Disordered stretches follow at residues 1065-1127 (HMRR…SVEQ) and 1167-1205 (GHLQYHDQGQQDSCASLSSNSKTQSSANTTQSNTPESAT). 3 stretches are compositionally biased toward low complexity: residues 1070–1097 (SQSCNSGANSPSSSPLSSSSPKPLQSPS), 1111–1124 (LSISSTSPRSRQSS), and 1181–1200 (ASLSSNSKTQSSANTTQSNT). Residues S1120, S1123, and S1124 each carry the phosphoserine modification. HEAT repeat units follow at residues 1289–1327 (NKHFRSIMRMLLNILEAEHTDVVIAGLHVLSKIMRSNKM) and 1408–1446 (DAHLDIVFPNLARSADDTQSMVRKAAVFCIVKLYFVLGE).

This sequence belongs to the CLASP family. As to quaternary structure, interacts with CLIP-190 and microtubules. Expressed in testis and ovary.

The protein localises to the cytoplasm. It is found in the cytoskeleton. It localises to the nucleus. The protein resides in the microtubule organizing center. Its subcellular location is the centrosome. The protein localises to the spindle. It is found in the cell projection. It localises to the growth cone. The protein resides in the cleavage furrow. In terms of biological role, microtubule plus-end tracking protein that promotes the stabilization of dynamic microtubules. Required for several aspects of mitotic spindle formation including the formation of the overlapping central spindle microtubules and kinetochore attachment. Required for the incorporation of tubulin subunits at the plus ends of kinetochore microtubules during poleward microtubule flux. Acts antagonistically to Klp10A and Klp67A to maintain metaphase spindle length. Also required for guidance of CNS axons downstream of Abl. May function to identify a subset of microtubules that probe the peripheral growth cone domain, where guidance signals exert their influence on cytoskeletal organization. Also required during oogenesis for the organization of the polarized microtubule network inside the 16-cell cyst that ensures oocyte differentiation. The protein is CLIP-associating protein (chb) of Drosophila melanogaster (Fruit fly).